We begin with the raw amino-acid sequence, 1766 residues long: Putative ATP-dependent RNA helicase R366 (1766 aa).

The interval 209–239 (KSSSNQNSNQSNQESNESNQEPNESNQEINQ) is disordered. The span at 210 to 239 (SSSNQNSNQSNQESNESNQEPNESNQEINQ) shows a compositional bias: low complexity. Residues 656-865 (YHHYSNNRVL…RYYRRINDNR (210 aa)) enclose the Helicase ATP-binding domain. 669-676 (GATGVGKS) is a binding site for ATP. The DEAH box motif lies at 812 to 815 (DEAH). The Helicase C-terminal domain maps to 947–1116 (DIHKSIKAIN…TMVKLIKSYP (170 aa)).

The protein belongs to the DEAD box helicase family. DEAH subfamily.

It catalyses the reaction ATP + H2O = ADP + phosphate + H(+). This chain is Putative ATP-dependent RNA helicase R366, found in Acanthamoeba polyphaga mimivirus (APMV).